The chain runs to 258 residues: Small ribosomal subunit protein mS23 (258 aa).

Belongs to the mitochondrion-specific ribosomal protein mS23 family. Component of the mitochondrial small ribosomal subunit.

It is found in the mitochondrion. This Aspergillus fumigatus (strain ATCC MYA-4609 / CBS 101355 / FGSC A1100 / Af293) (Neosartorya fumigata) protein is Small ribosomal subunit protein mS23 (rsm25).